The following is a 339-amino-acid chain: Glucokinase (339 aa).

Residue 16-21 participates in ATP binding; sequence GDIGGT.

This sequence belongs to the bacterial glucokinase family.

It is found in the cytoplasm. The enzyme catalyses D-glucose + ATP = D-glucose 6-phosphate + ADP + H(+). The chain is Glucokinase from Sinorhizobium fredii (strain NBRC 101917 / NGR234).